A 255-amino-acid polypeptide reads, in one-letter code: MSGHSKWATTKHKKAIIDSRRAKSFAKLIKNIEVAAKIGGADMSGNPTLVDAVQKAKKTSVPNDNIDRAVKRGAGLLGEVVDYQTIMYEGYAASGVAMLVECLTDNKNRAAAEVRTAMSRNGGTMADPGSVAYNFHRKGVIAVPHDEAPTEDDVLAAVLDAGAEDVTDHGEVFEIRCEPSDMVAVRQALQEAGIDYDSADVEFVPQVKVEVDLETARKVNKLVDAMEDLDDVQNIYVNSDVPADVQAALDDDDEE.

It belongs to the TACO1 family.

It is found in the cytoplasm. This is Probable transcriptional regulatory protein CMM_1817 from Clavibacter michiganensis subsp. michiganensis (strain NCPPB 382).